Here is a 139-residue protein sequence, read N- to C-terminus: Natriuretic peptides A (139 aa).

A signal peptide spans 1–21; that stretch reads MTALVLWGLLLLLGQHTQVNS. Positions 22-114 are excised as a propeptide; sequence HVLGRPFSAS…QDLLMSLRKR (93 aa). Cysteines 118 and 134 form a disulfide.

This sequence belongs to the natriuretic peptide family.

It is found in the secreted. Its function is as follows. Hormone playing a key role in cardiovascular homeostasis through regulation of natriuresis, diuresis, and vasodilation. Has a cGMP-stimulating activity. The protein is Natriuretic peptides A (nppa) of Takifugu rubripes (Japanese pufferfish).